The primary structure comprises 529 residues: MQQRRPVRRALLSVSDKAGIVEFAQALSARGVELLSTGGTARLLAEKGLPVTEVSDYTGFPEMMDGRVKTLHPKVHGGILGRRGQDDAIMEEHQIQPIDMVVVNLYPFAQTVAREGCSLEDAVENIDIGGPTMVRSAAKNHKDVAIVVKSSDYDAIIKEIDANEGSLTLETRFDLAIKAFEHTAAYDSMIANYFGSMVPAYHGESKEAAGRFPRTLNLNFIKKQDMRYGENSHQQAAFYIEENVKEASVATATQVQGKALSYNNIADTDAALECVKEFAEPACVIVKHANPCGVAIGNSILDAYDRAYKTDPTSAFGGIIAFNRELDAETAQAIISRQFVEVIIAPSASEEALKITAAKQNVRVLTCGQWGERVPGLDFKRVNGGLLVQDRDLGMVGAEELRVVTKRQPTEQELRDALFCWKVAKFVKSNAIVYAKNNMTIGIGAGQMSRVYSAKIAGIKAADEGLEVKGSSMASDAFFPFRDGIDAAAAAGVTCVIQPGGSIRDDEVIAAADEHGIAMLFTDMRHFRH.

One can recognise an MGS-like domain in the interval 1 to 148; sequence MQQRRPVRRA…KNHKDVAIVV (148 aa). Lys-287 carries the N6-acetyllysine modification.

Belongs to the PurH family.

It catalyses the reaction (6R)-10-formyltetrahydrofolate + 5-amino-1-(5-phospho-beta-D-ribosyl)imidazole-4-carboxamide = 5-formamido-1-(5-phospho-D-ribosyl)imidazole-4-carboxamide + (6S)-5,6,7,8-tetrahydrofolate. The enzyme catalyses IMP + H2O = 5-formamido-1-(5-phospho-D-ribosyl)imidazole-4-carboxamide. The protein operates within purine metabolism; IMP biosynthesis via de novo pathway; 5-formamido-1-(5-phospho-D-ribosyl)imidazole-4-carboxamide from 5-amino-1-(5-phospho-D-ribosyl)imidazole-4-carboxamide (10-formyl THF route): step 1/1. Its pathway is purine metabolism; IMP biosynthesis via de novo pathway; IMP from 5-formamido-1-(5-phospho-D-ribosyl)imidazole-4-carboxamide: step 1/1. The polypeptide is Bifunctional purine biosynthesis protein PurH (Escherichia coli O7:K1 (strain IAI39 / ExPEC)).